The following is a 391-amino-acid chain: Oxytocin receptor (391 aa).

Topologically, residues 1–38 (MEGAFAANWSAEAVNGSAAPPGTEGNRTAGPPQRNEAL) are extracellular. Asn-8, Asn-15, and Asn-26 each carry an N-linked (GlcNAc...) asparagine glycan. A helical membrane pass occupies residues 39–63 (ARVEVAVLCLILFLALSGNACVLLA). Residues 64-74 (LRTTRHKHSRL) are Cytoplasmic-facing. Residues 75-97 (FFFMKHLSIADLVVAVFQVLPQL) traverse the membrane as a helical segment. The Extracellular segment spans residues 98–113 (LWDITFRFYGPDLLCR). Residues Cys-112 and Cys-187 are joined by a disulfide bond. A helical membrane pass occupies residues 114–135 (LVKYLQVVGMFASTYLLLLMSL). Topologically, residues 136-154 (DRCLAICQPLRSLSRRTDR) are cytoplasmic. The helical transmembrane segment at 155-175 (LAVLVTWLGCLVASAPQVHIF) threads the bilayer. Residues 176-202 (SLREVADGVFDCWAVFIQPWGPKAYIT) are Extracellular-facing. The helical transmembrane segment at 203–225 (WITLAVYIVPVIVLATCYGLISF) threads the bilayer. The Cytoplasmic portion of the chain corresponds to 226–277 (KIWQNLRLKTAAAAAEAAAGAEGEAADWAGRAILARVSNVKLISKAKIRTVK). The helical transmembrane segment at 278 to 296 (MTFIVVLAFIVCWTPFFFV) threads the bilayer. Over 297 to 311 (QMWSVWDADAPKEAS) the chain is Extracellular. The chain crosses the membrane as a helical span at residues 312–334 (PFIIAMLLASLNSCCNPWIYMLF). The Cytoplasmic segment spans residues 335–391 (TGHLFQELVQRFLCCSFRRLKGSRPGETSVSKKSNSSTFVLSQYSSSQRRCSQPSTL). Phosphoserine occurs at positions 368 and 370.

Belongs to the G-protein coupled receptor 1 family. Vasopressin/oxytocin receptor subfamily.

It is found in the cell membrane. Receptor for oxytocin. The activity of this receptor is mediated by G proteins which activate a phosphatidylinositol-calcium second messenger system. The chain is Oxytocin receptor (OXTR) from Bos taurus (Bovine).